Reading from the N-terminus, the 1572-residue chain is Multiple epidermal growth factor-like domains protein 6 (1572 aa).

The N-terminal stretch at 1-26 (MPVGVEARASWRVVALTLLLLPAVPA) is a signal peptide. Positions 40–121 (MPHVCAEQKL…QKPGQEGCLS (82 aa)) constitute an EMI domain. 36 disulfide bridges follow: Cys-44/Cys-107, Cys-73/Cys-79, Cys-106/Cys-119, Cys-126/Cys-137, Cys-133/Cys-146, Cys-148/Cys-161, Cys-167/Cys-178, Cys-174/Cys-187, Cys-189/Cys-202, Cys-291/Cys-302, Cys-298/Cys-311, Cys-313/Cys-326, Cys-418/Cys-429, Cys-425/Cys-438, Cys-440/Cys-453, Cys-522/Cys-535, Cys-529/Cys-542, Cys-544/Cys-553, Cys-566/Cys-578, Cys-572/Cys-585, Cys-587/Cys-596, Cys-609/Cys-621, Cys-615/Cys-628, Cys-630/Cys-639, Cys-788/Cys-797, Cys-791/Cys-804, Cys-806/Cys-815, Cys-832/Cys-840, Cys-834/Cys-847, Cys-849/Cys-858, Cys-871/Cys-884, Cys-875/Cys-891, Cys-893/Cys-902, Cys-915/Cys-927, Cys-921/Cys-934, and Cys-936/Cys-945. An EGF-like 1; calcium-binding domain is found at 122–162 (DVDECANANGGCEGPCCNTVGGFYCRCPPGYQLQGDGKTCQ). Residues 163–203 (DVDECRSHNGGCQHRCVNTPGSYLCECKPGFRLHTDGRTCL) enclose the EGF-like 2; calcium-binding domain. The EGF-like 3; calcium-binding domain maps to 287–327 (DVDECALGLAQCAHGCLNTQGSFKCVCHAGYELGADGRQCY). Residues 414–454 (DVDECASGHSGCEHHCSNLAGSFQCFCEAGYRLDEDRRGCT) enclose the EGF-like 4; calcium-binding domain. EGF-like domains are found at residues 518-554 (FGHD…IICN), 562-597 (FGKN…AHCE), 605-640 (YGKH…RFCH), 785-816 (QEIC…SRCQ), 829-859 (QMRC…LSCQ), 867-903 (WGPD…PQCE), 911-946 (FGPG…SFCE), 997-1032 (FGLN…PTCL), 1040-1075 (YGKN…LACE), 1083-1118 (HGAG…DKCQ), 1131-1161 (EEHC…SHCE), 1169-1204 (FGEA…PGCE), 1256-1291 (YGPG…ADCS), 1299-1334 (FGPS…GHCE), 1342-1377 (FGKG…PHCE), 1390-1420 (LLEC…QACE), and 1428-1463 (HGSG…QFCE). Asn-1000 is a glycosylation site (N-linked (GlcNAc...) asparagine). Cystine bridges form between Cys-1001-Cys-1013, Cys-1007-Cys-1020, Cys-1022-Cys-1031, Cys-1044-Cys-1056, Cys-1050-Cys-1063, Cys-1065-Cys-1074, Cys-1087-Cys-1099, Cys-1093-Cys-1106, Cys-1108-Cys-1117, Cys-1134-Cys-1142, Cys-1136-Cys-1149, Cys-1151-Cys-1160, Cys-1173-Cys-1185, Cys-1177-Cys-1192, Cys-1194-Cys-1203, Cys-1260-Cys-1272, Cys-1266-Cys-1279, Cys-1281-Cys-1290, Cys-1303-Cys-1315, Cys-1309-Cys-1322, Cys-1324-Cys-1333, Cys-1346-Cys-1358, Cys-1352-Cys-1365, Cys-1367-Cys-1376, Cys-1393-Cys-1401, Cys-1395-Cys-1408, Cys-1410-Cys-1419, Cys-1432-Cys-1444, Cys-1438-Cys-1451, and Cys-1453-Cys-1462.

The protein resides in the secreted. The polypeptide is Multiple epidermal growth factor-like domains protein 6 (Megf6) (Mus musculus (Mouse)).